A 146-amino-acid chain; its full sequence is Large ribosomal subunit protein uL15 (146 aa).

The tract at residues 1-58 is disordered; that stretch reads MKLNELSPPKGARTARKRKGRGPGSGLGKTAGKGHKGQKARSGGGVRPGFEGGQMPVH. 2 stretches are compositionally biased toward gly residues: residues 22-31 and 42-52; these read GPGSGLGKTA and SGGGVRPGFEG.

This sequence belongs to the universal ribosomal protein uL15 family. In terms of assembly, part of the 50S ribosomal subunit.

Binds to the 23S rRNA. This chain is Large ribosomal subunit protein uL15, found in Desulfatibacillum aliphaticivorans.